The primary structure comprises 397 residues: Phosphonopyruvate decarboxylase (397 aa).

Belongs to the TPP enzyme family. Thiamine diphosphate serves as cofactor. The cofactor is Mg(2+).

It carries out the reaction 3-phosphonopyruvate + H(+) = phosphonoacetaldehyde + CO2. The protein operates within secondary metabolite biosynthesis; bialaphos biosynthesis. Its function is as follows. Involved in the biosynthesis of phosphinothricin tripeptide (PTT), also known as bialaphos (BA), a natural-product antibiotic and potent herbicide. Catalyzes the decarboxylation of phosphonopyruvate (PnPy) to generate phosphonoacetaldehyde (PnAA). This chain is Phosphonopyruvate decarboxylase, found in Streptomyces viridochromogenes (strain DSM 40736 / JCM 4977 / BCRC 1201 / Tue 494).